The primary structure comprises 103 residues: NADH dehydrogenase [ubiquinone] 1 beta subcomplex subunit 7 (103 aa).

The CHCH domain occupies 27–69; sequence RDMCAHLLIPLNKCRQAEFYLPWKCEDERHVYEKCEYELVMER. Short sequence motifs (cx9C motif) lie at residues 30-40 and 51-61; these read CAHLLIPLNKC and CEDERHVYEKC. 2 disulfide bridges follow: cysteine 30-cysteine 61 and cysteine 40-cysteine 51.

It belongs to the complex I NDUFB7 subunit family. As to quaternary structure, complex I is composed of at least 49 different subunits.

Its subcellular location is the mitochondrion. The protein resides in the mitochondrion inner membrane. It localises to the mitochondrion intermembrane space. In terms of biological role, accessory subunit of the mitochondrial membrane respiratory chain NADH dehydrogenase (Complex I), that is believed not to be involved in catalysis. Complex I functions in the transfer of electrons from NADH to the respiratory chain. The immediate electron acceptor for the enzyme is believed to be ubiquinone. The chain is NADH dehydrogenase [ubiquinone] 1 beta subcomplex subunit 7 from Arabidopsis thaliana (Mouse-ear cress).